Consider the following 283-residue polypeptide: Bifunctional protein FolD (283 aa).

Residues 165–167, Ser190, and Ile231 each bind NADP(+); that span reads GAS.

Belongs to the tetrahydrofolate dehydrogenase/cyclohydrolase family. As to quaternary structure, homodimer.

It carries out the reaction (6R)-5,10-methylene-5,6,7,8-tetrahydrofolate + NADP(+) = (6R)-5,10-methenyltetrahydrofolate + NADPH. The catalysed reaction is (6R)-5,10-methenyltetrahydrofolate + H2O = (6R)-10-formyltetrahydrofolate + H(+). Its pathway is one-carbon metabolism; tetrahydrofolate interconversion. In terms of biological role, catalyzes the oxidation of 5,10-methylenetetrahydrofolate to 5,10-methenyltetrahydrofolate and then the hydrolysis of 5,10-methenyltetrahydrofolate to 10-formyltetrahydrofolate. The chain is Bifunctional protein FolD from Bordetella bronchiseptica (strain ATCC BAA-588 / NCTC 13252 / RB50) (Alcaligenes bronchisepticus).